Reading from the N-terminus, the 85-residue chain is Large ribosomal subunit protein bL27 (85 aa).

This sequence belongs to the bacterial ribosomal protein bL27 family.

This is Large ribosomal subunit protein bL27 from Campylobacter hominis (strain ATCC BAA-381 / DSM 21671 / CCUG 45161 / LMG 19568 / NCTC 13146 / CH001A).